The following is a 78-amino-acid chain: Chondrosarcoma-associated gene 1 protein (78 aa).

A signal peptide spans 1-19; it reads MSATTACWPAFTVLGEARG. Residues 35–78 are disordered; that stretch reads KMSRKPRASSPFSNNHPSTPKRFPRQPRREKGPVKEVPGTKGSP.

As to expression, expressed in chondrosarcoma, melanoma, cartilage and testis, but not in other normal tissues.

The protein localises to the cytoplasm. It is found in the cytoskeleton. The protein resides in the microtubule organizing center. Its subcellular location is the centrosome. It localises to the spindle pole. In terms of biological role, may play an important role in maintaining centrosome integrity during mitosis. The protein is Chondrosarcoma-associated gene 1 protein of Homo sapiens (Human).